The chain runs to 550 residues: Hydroxylamine reductase (550 aa).

Residues cysteine 3, cysteine 6, cysteine 18, and cysteine 25 each coordinate [2Fe-2S] cluster. Hybrid [4Fe-2O-2S] cluster is bound by residues histidine 249, glutamate 273, cysteine 317, cysteine 405, cysteine 433, cysteine 458, glutamate 492, and lysine 494. Cysteine 405 bears the Cysteine persulfide mark.

Belongs to the HCP family. [2Fe-2S] cluster is required as a cofactor. The cofactor is hybrid [4Fe-2O-2S] cluster.

It localises to the cytoplasm. It catalyses the reaction A + NH4(+) + H2O = hydroxylamine + AH2 + H(+). Its function is as follows. Catalyzes the reduction of hydroxylamine to form NH(3) and H(2)O. This chain is Hydroxylamine reductase, found in Shigella boydii serotype 18 (strain CDC 3083-94 / BS512).